The following is a 382-amino-acid chain: MNEVYVFTSESVSEGHPDKIADQISDAILDAILAQDPKARVACEVLVKTGMVLVGGEITTKAWVDVEDITRHVIKDIGYNSSQMGFDWESCAVLSAIGKQSPDIAQGVDNQQTKILGAGDQGLMFGYASRETDVFMPAPIAYAHRLMEKLAKARKSGQLPWLRPDAKCQLTLKYEQGMPVEVDTVVFSTQHSPDIEHKDLVEAIREEIIKSVLPAEWLNDKTRYFINPTGRFVIGGPLGDCGLTGRKIIVDTYGGMARHGGGCFSGKDPSKVDRSAAYAARHVAKNIVAAGLADKCELQISYAIGVAEPTSIFVDTFGTGRLKNSEIIDLIHTHFDLTPQGIIDQHDLLRPIYRQTATYGHYGRESFPWERLDKVAELSKAL.

Histidine 16 is an ATP binding site. Aspartate 18 contributes to the Mg(2+) binding site. K(+) is bound at residue glutamate 44. Glutamate 57 and glutamine 100 together coordinate L-methionine. Residues 100 to 110 (QSPDIAQGVDN) are flexible loop. Residues 165 to 167 (DAK), 231 to 232 (RF), aspartate 240, 246 to 247 (RK), and lysine 267 contribute to the ATP site. An L-methionine-binding site is contributed by aspartate 240. Lysine 271 contacts L-methionine.

This sequence belongs to the AdoMet synthase family. As to quaternary structure, homotetramer; dimer of dimers. Mg(2+) serves as cofactor. The cofactor is K(+).

The protein resides in the cytoplasm. The enzyme catalyses L-methionine + ATP + H2O = S-adenosyl-L-methionine + phosphate + diphosphate. The protein operates within amino-acid biosynthesis; S-adenosyl-L-methionine biosynthesis; S-adenosyl-L-methionine from L-methionine: step 1/1. Catalyzes the formation of S-adenosylmethionine (AdoMet) from methionine and ATP. The overall synthetic reaction is composed of two sequential steps, AdoMet formation and the subsequent tripolyphosphate hydrolysis which occurs prior to release of AdoMet from the enzyme. In Legionella pneumophila (strain Lens), this protein is S-adenosylmethionine synthase.